Consider the following 476-residue polypeptide: Trigger factor (476 aa).

The PPIase FKBP-type domain occupies 169–254 (GDKVTLDYVG…VKEVAAAEEL (86 aa)). Positions 437 to 476 (SRDELLAEDEAEGEEKKAAGETKKKAAPKKKAAKKESAAE) are disordered. Basic and acidic residues predominate over residues 450 to 460 (EEKKAAGETKK).

Belongs to the FKBP-type PPIase family. Tig subfamily.

The protein resides in the cytoplasm. It catalyses the reaction [protein]-peptidylproline (omega=180) = [protein]-peptidylproline (omega=0). Its function is as follows. Involved in protein export. Acts as a chaperone by maintaining the newly synthesized protein in an open conformation. Functions as a peptidyl-prolyl cis-trans isomerase. The protein is Trigger factor of Chelativorans sp. (strain BNC1).